We begin with the raw amino-acid sequence, 352 residues long: UDP-N-acetylglucosamine--N-acetylmuramyl-(pentapeptide) pyrophosphoryl-undecaprenol N-acetylglucosamine transferase (352 aa).

UDP-N-acetyl-alpha-D-glucosamine-binding positions include 13-15, N125, R161, S189, I242, 261-266, and Q286; these read TGG and ALTVSE.

This sequence belongs to the glycosyltransferase 28 family. MurG subfamily.

It is found in the cell inner membrane. The enzyme catalyses di-trans,octa-cis-undecaprenyl diphospho-N-acetyl-alpha-D-muramoyl-L-alanyl-D-glutamyl-meso-2,6-diaminopimeloyl-D-alanyl-D-alanine + UDP-N-acetyl-alpha-D-glucosamine = di-trans,octa-cis-undecaprenyl diphospho-[N-acetyl-alpha-D-glucosaminyl-(1-&gt;4)]-N-acetyl-alpha-D-muramoyl-L-alanyl-D-glutamyl-meso-2,6-diaminopimeloyl-D-alanyl-D-alanine + UDP + H(+). Its pathway is cell wall biogenesis; peptidoglycan biosynthesis. Functionally, cell wall formation. Catalyzes the transfer of a GlcNAc subunit on undecaprenyl-pyrophosphoryl-MurNAc-pentapeptide (lipid intermediate I) to form undecaprenyl-pyrophosphoryl-MurNAc-(pentapeptide)GlcNAc (lipid intermediate II). In Erwinia tasmaniensis (strain DSM 17950 / CFBP 7177 / CIP 109463 / NCPPB 4357 / Et1/99), this protein is UDP-N-acetylglucosamine--N-acetylmuramyl-(pentapeptide) pyrophosphoryl-undecaprenol N-acetylglucosamine transferase.